Reading from the N-terminus, the 286-residue chain is Ribosomal RNA small subunit methyltransferase H (286 aa).

S-adenosyl-L-methionine is bound by residues 30–32, Asp49, Phe88, Asp97, and Gln104; that span reads GGH. The interval 260–286 is disordered; sequence HPLQPSDEESFNNPASRSAKLRALEMR.

This sequence belongs to the methyltransferase superfamily. RsmH family.

Its subcellular location is the cytoplasm. The catalysed reaction is cytidine(1402) in 16S rRNA + S-adenosyl-L-methionine = N(4)-methylcytidine(1402) in 16S rRNA + S-adenosyl-L-homocysteine + H(+). Its function is as follows. Specifically methylates the N4 position of cytidine in position 1402 (C1402) of 16S rRNA. In Solibacter usitatus (strain Ellin6076), this protein is Ribosomal RNA small subunit methyltransferase H.